The sequence spans 358 residues: tRNA-specific 2-thiouridylase MnmA (358 aa).

ATP contacts are provided by residues 22-29 and Phe48; that span reads LVSGGIDS. The active-site Nucleophile is the Cys105. An intrachain disulfide couples Cys105 to Cys201. An ATP-binding site is contributed by Gly129. Residues 151-153 form an interaction with tRNA region; sequence KEQ. The active-site Cysteine persulfide intermediate is Cys201. The interaction with tRNA stretch occupies residues 306 to 307; the sequence is RY.

It belongs to the MnmA/TRMU family.

Its subcellular location is the cytoplasm. It carries out the reaction S-sulfanyl-L-cysteinyl-[protein] + uridine(34) in tRNA + AH2 + ATP = 2-thiouridine(34) in tRNA + L-cysteinyl-[protein] + A + AMP + diphosphate + H(+). Catalyzes the 2-thiolation of uridine at the wobble position (U34) of tRNA, leading to the formation of s(2)U34. This Desulfosudis oleivorans (strain DSM 6200 / JCM 39069 / Hxd3) (Desulfococcus oleovorans) protein is tRNA-specific 2-thiouridylase MnmA.